The sequence spans 163 residues: Xanthine-guanine phosphoribosyltransferase (163 aa).

5-phospho-alpha-D-ribose 1-diphosphate is bound by residues 43-44 and 95-103; these read RG and DDLADTGGT. Asp-96 contributes to the Mg(2+) binding site. The guanine site is built by Asp-99 and Ile-142. The xanthine site is built by Asp-99 and Ile-142. GMP-binding positions include 99 to 103 and 141 to 142; these read DTGGT and WI.

Belongs to the purine/pyrimidine phosphoribosyltransferase family. XGPT subfamily. Homotetramer. The cofactor is Mg(2+).

Its subcellular location is the cell inner membrane. The catalysed reaction is GMP + diphosphate = guanine + 5-phospho-alpha-D-ribose 1-diphosphate. It carries out the reaction XMP + diphosphate = xanthine + 5-phospho-alpha-D-ribose 1-diphosphate. The enzyme catalyses IMP + diphosphate = hypoxanthine + 5-phospho-alpha-D-ribose 1-diphosphate. The protein operates within purine metabolism; GMP biosynthesis via salvage pathway; GMP from guanine: step 1/1. It participates in purine metabolism; XMP biosynthesis via salvage pathway; XMP from xanthine: step 1/1. Its function is as follows. Purine salvage pathway enzyme that catalyzes the transfer of the ribosyl-5-phosphate group from 5-phospho-alpha-D-ribose 1-diphosphate (PRPP) to the N9 position of the 6-oxopurines guanine and xanthine to form the corresponding ribonucleotides GMP (guanosine 5'-monophosphate) and XMP (xanthosine 5'-monophosphate), with the release of PPi. To a lesser extent, also acts on hypoxanthine. The chain is Xanthine-guanine phosphoribosyltransferase from Nitratidesulfovibrio vulgaris (strain ATCC 29579 / DSM 644 / CCUG 34227 / NCIMB 8303 / VKM B-1760 / Hildenborough) (Desulfovibrio vulgaris).